Here is a 428-residue protein sequence, read N- to C-terminus: Cysteine synthase 2 (428 aa).

Residues 7–27 (IYIGSAFVAGVVLTIAFKDLF) traverse the membrane as a helical segment. Residue Lys-106 is modified to N6-(pyridoxal phosphate)lysine. Residues 260–264 (GTGGT) and Ser-367 contribute to the pyridoxal 5'-phosphate site.

Belongs to the cysteine synthase/cystathionine beta-synthase family. It depends on pyridoxal 5'-phosphate as a cofactor.

The protein resides in the mitochondrion outer membrane. The enzyme catalyses O-acetyl-L-serine + hydrogen sulfide = L-cysteine + acetate. In terms of biological role, putative cysteine synthase that catalyzes the conversion of O-acetyl-L-serine (OAS) into cysteine, the last step in the cysteine biosynthesis pathway. However, in contrast to cysteine synthase cysB, this CS-like protein seems not to function in cysteine biosynthesis. The sequence is that of Cysteine synthase 2 from Emericella nidulans (strain FGSC A4 / ATCC 38163 / CBS 112.46 / NRRL 194 / M139) (Aspergillus nidulans).